The primary structure comprises 288 residues: GDSL esterase/lipase At3g43550 (288 aa).

The signal sequence occupies residues 1–19; sequence MKLQIIWLALVLIAVETYA. Asparagine 25 carries an N-linked (GlcNAc...) asparagine glycan. Serine 37 serves as the catalytic Nucleophile.

This sequence belongs to the 'GDSL' lipolytic enzyme family.

Its subcellular location is the secreted. In Arabidopsis thaliana (Mouse-ear cress), this protein is GDSL esterase/lipase At3g43550.